The primary structure comprises 1412 residues: Cardiac-enriched FHL2-interacting protein (1412 aa).

7 disordered regions span residues 106–177 (VQGE…PKFA), 202–443 (VSNT…YNPP), 460–500 (LETS…SKAP), 517–848 (YSPL…TNKH), 877–923 (SEDS…VPGT), 935–1255 (EDPV…YPAT), and 1344–1412 (RQGS…EGVS). A Phosphothreonine modification is found at Thr-120. The segment covering 135 to 145 (SSSKPISKVSS) has biased composition (low complexity). Over residues 161 to 171 (RPPPSKPPALK) the composition is skewed to pro residues. Polar residues predominate over residues 202–212 (VSNTHQGSHQS). Composition is skewed to basic and acidic residues over residues 285 to 299 (WDTH…KDIA) and 306 to 316 (KAPKHYEDMPL). Ser-328 carries the phosphoserine modification. Polar residues predominate over residues 343-352 (SPSGSQSTSG). The span at 378–389 (KRSKAPWRKPKT) shows a compositional bias: basic residues. Ser-473 is modified (phosphoserine). 2 stretches are compositionally biased toward basic and acidic residues: residues 482–496 (QEKE…DSYK) and 525–538 (GFDE…DSKQ). A compositionally biased stretch (low complexity) spans 587-612 (SHPTFSSPSASSQTHFCVNGEAAESN). The segment covering 632–641 (GHPDCRENLP) has biased composition (basic and acidic residues). 3 stretches are compositionally biased toward polar residues: residues 670 to 679 (NGLSRSVSQE), 687 to 697 (GFQSLPLNQKF), and 712 to 722 (SDSQSDFTPCR). Over residues 728–741 (FSTSSSDQSFASFE) the composition is skewed to low complexity. The span at 753–799 (QEDRKSHVSAGDKQRDETAVEKEESQQCASRNEHRGVDEQRQEEIQR) shows a compositional bias: basic and acidic residues. Position 813 is a phosphoserine (Ser-813). Basic and acidic residues predominate over residues 826–837 (ADKDTAHTHAKD). Composition is skewed to polar residues over residues 904 to 921 (ASES…NDVP), 943 to 953 (QDETSQQTRKG), and 1047 to 1066 (AETS…SPAA). Basic residues predominate over residues 1164–1175 (RRAKKLASKRRK). Over residues 1176-1203 (SDQLLEKHTEAWEGKSFTEDTQGTERRP) the composition is skewed to basic and acidic residues. Acidic residues predominate over residues 1401 to 1412 (DDLEDFATEGVS).

As to quaternary structure, interacts with FHL2. As to expression, expressed in the heart and skeletal muscle (at protein level).

It is found in the cytoplasm. The protein resides in the myofibril. Its subcellular location is the sarcomere. The protein localises to the z line. Functionally, plays an important role in cardiomyocyte hypertrophy via activation of the calcineurin/NFAT signaling pathway. The chain is Cardiac-enriched FHL2-interacting protein from Mus musculus (Mouse).